Here is a 427-residue protein sequence, read N- to C-terminus: Protein TolB homolog (427 aa).

An N-terminal signal peptide occupies residues 1-20 (MLRRIFVSTFLVFGIVSLYA).

Belongs to the TolB family.

It localises to the periplasm. This is Protein TolB homolog from Chlamydia caviae (strain ATCC VR-813 / DSM 19441 / 03DC25 / GPIC) (Chlamydophila caviae).